The primary structure comprises 156 residues: EPIDERMAL PATTERNING FACTOR-like protein 6 (156 aa).

An N-terminal signal peptide occupies residues 1-47; it reads MGFERTSSSLSLLSSSLPSSLQPSENTRAKFSLFYLLLLFFVLCVIA. 3 disulfides stabilise this stretch: Cys113/Cys147, Cys117/Cys123, and Cys120/Cys149.

Belongs to the plant cysteine rich small secretory peptide family. Epidermal patterning factor subfamily. In terms of assembly, interacts with ERECTA. In terms of tissue distribution, expressed in the internal layers of the root, hypocotyl and stems, and in the midrib of developing rosette leaves. Detected in a ring of cells surrounding the vascular elements. Expressed in developing stems soon after bolting, in inflorescence stems, near the root apex and in the chalazal region of ovules. Not found in cotyledons or in stomatal precursors or stomata.

It is found in the secreted. Acts primarily as positive regulator of inflorescence growth. Endodermal expression is sufficient for proper inflorescence architecture. Redundantly involved with EPFL4 in procambial development regulation. Also acts as tissue-specific regulator of epidermal pattern. Controls stomatal patterning by repressing stomatal production. TMM (AC Q9SSD1) functions to dampen or block CHAL signaling. Not processed by SDD1 (AC O64495). Acts as growth-regulatory ligand for ERECTA family receptors. This is EPIDERMAL PATTERNING FACTOR-like protein 6 from Arabidopsis thaliana (Mouse-ear cress).